Here is a 48-residue protein sequence, read N- to C-terminus: Large ribosomal subunit protein bL33A (48 aa).

Belongs to the bacterial ribosomal protein bL33 family.

This Bacillus mycoides (strain KBAB4) (Bacillus weihenstephanensis) protein is Large ribosomal subunit protein bL33A.